The following is a 478-amino-acid chain: tRNA(Ile)-lysidine synthase (478 aa).

27–32 (SGGSDS) provides a ligand contact to ATP.

Belongs to the tRNA(Ile)-lysidine synthase family.

The protein localises to the cytoplasm. It catalyses the reaction cytidine(34) in tRNA(Ile2) + L-lysine + ATP = lysidine(34) in tRNA(Ile2) + AMP + diphosphate + H(+). Its function is as follows. Ligates lysine onto the cytidine present at position 34 of the AUA codon-specific tRNA(Ile) that contains the anticodon CAU, in an ATP-dependent manner. Cytidine is converted to lysidine, thus changing the amino acid specificity of the tRNA from methionine to isoleucine. The polypeptide is tRNA(Ile)-lysidine synthase (Rickettsia africae (strain ESF-5)).